A 328-amino-acid chain; its full sequence is Ankyrin repeat domain-containing protein 2 (328 aa).

Residue Ser-36 is modified to Phosphoserine. Ser-68 is subject to Phosphoserine; by PKB/AKT2. The interval 96–116 (RDALAAAQEPPPEPEEITGPV) is disordered. ANK repeat units lie at residues 116–145 (VNEE…SADT), 149–178 (FRRT…TVDF), 182–211 (LDCT…DTNV), 215–244 (LLST…DINA), and 248–277 (EGDS…DMMA). A disordered region spans residues 297 to 328 (RHALEHPEPESEQNGLERPGSGRETPQPIPAQ).

As to quaternary structure, interacts with ID3; both proteins cooperate in myoblast differentiation. Interacts with TTN/titin. Interacts (via ANK repeats) with TCAP; the interaction is direct. Interacts with TJP1 (via PDZ domains). Interacts with PML; the interaction is direct. Interacts with p53/TP53. Interacts with YBX1. Interacts with AKT2. In terms of processing, phosphorylation at Ser-68 by PKB/AKT2 in response to oxidative stress induces translocation to the nucleus and negatively regulates myoblast differentiation. In terms of tissue distribution, expressed by myoblasts (at protein level). Expressed in skeletal and cardiac muscles.

Its subcellular location is the cytoplasm. The protein localises to the myofibril. The protein resides in the sarcomere. It localises to the i band. It is found in the cytosol. Its subcellular location is the nucleus. The protein localises to the PML body. In terms of biological role, functions as a negative regulator of myocyte differentiation. May interact with both sarcoplasmic structural proteins and nuclear proteins to regulate gene expression during muscle development and in response to muscle stress. The chain is Ankyrin repeat domain-containing protein 2 (Ankrd2) from Mus musculus (Mouse).